Here is a 331-residue protein sequence, read N- to C-terminus: Adenosine deaminase (331 aa).

Zn(2+) contacts are provided by His-12 and His-14. Residues His-14 and Asp-16 each contribute to the substrate site. His-197 provides a ligand contact to Zn(2+). Glu-200 acts as the Proton donor in catalysis. Asp-278 contributes to the Zn(2+) binding site.

It belongs to the metallo-dependent hydrolases superfamily. Adenosine and AMP deaminases family. Adenosine deaminase subfamily. Zn(2+) serves as cofactor.

The catalysed reaction is adenosine + H2O + H(+) = inosine + NH4(+). The enzyme catalyses 2'-deoxyadenosine + H2O + H(+) = 2'-deoxyinosine + NH4(+). In terms of biological role, catalyzes the hydrolytic deamination of adenosine and 2-deoxyadenosine. The chain is Adenosine deaminase from Shewanella pealeana (strain ATCC 700345 / ANG-SQ1).